Reading from the N-terminus, the 140-residue chain is Peptidyl-prolyl cis-trans isomerase FKBP2 (140 aa).

An N-terminal signal peptide occupies residues 1–20; the sequence is MRLSWVLTVLSICLSALVTA. Positions 47-135 constitute a PPIase FKBP-type domain; it reads GDVLHMHYTG…VFEVELLKIE (89 aa).

This sequence belongs to the FKBP-type PPIase family. FKBP2 subfamily. As to quaternary structure, interacts with ARFGEF1/BIG1 and the C-terminal of EPB41L2.

The protein localises to the endoplasmic reticulum membrane. It carries out the reaction [protein]-peptidylproline (omega=180) = [protein]-peptidylproline (omega=0). Inhibited by both FK506 and rapamycin. Functionally, PPIases accelerate the folding of proteins. It catalyzes the cis-trans isomerization of proline imidic peptide bonds in oligopeptides. The polypeptide is Peptidyl-prolyl cis-trans isomerase FKBP2 (FKBP2) (Bos taurus (Bovine)).